Consider the following 698-residue polypeptide: Serine/threonine-protein kinase Nek8 (698 aa).

The Protein kinase domain occupies 4–258 (YERIRVVGRG…LSHIMAQPLC (255 aa)). Residues 10–18 (VGRGAFGIV) and lysine 33 each bind ATP. Aspartate 128 acts as the Proton acceptor in catalysis. Position 162 is a phosphothreonine; by autocatalysis (threonine 162). Positions 281–307 (LTPGTPMAPGSTGSRATSARCRGVPRG) are disordered. RCC1 repeat units lie at residues 415–466 (RGII…ALSA), 467–518 (DGEL…ILTS), 520–571 (GRVL…TLLC), 585–636 (SGAC…AIGA), and 638–689 (GEVY…LAVR).

Belongs to the protein kinase superfamily. NEK Ser/Thr protein kinase family. NIMA subfamily. As to quaternary structure, interacts with PKD2; may regulate PKD2 targeting to the cilium. Interacts with ANKS6. Component of a complex containing at least ANKS6, INVS, NEK8 and NPHP3. ANKS6 may organize complex assembly by linking INVS and NPHP3 to NEK8 and INVS may target it to the proximal ciliary axoneme. Interacts with ANKS3. Requires Mg(2+) as cofactor.

Its subcellular location is the cytoplasm. It localises to the cytoskeleton. The protein localises to the cell projection. It is found in the cilium. The protein resides in the cilium axoneme. Its subcellular location is the microtubule organizing center. It localises to the centrosome. It carries out the reaction L-seryl-[protein] + ATP = O-phospho-L-seryl-[protein] + ADP + H(+). The catalysed reaction is L-threonyl-[protein] + ATP = O-phospho-L-threonyl-[protein] + ADP + H(+). In terms of biological role, required for renal tubular integrity. May regulate local cytoskeletal structure in kidney tubule epithelial cells. May regulate ciliary biogenesis through targeting of proteins to the cilia. Plays a role in organogenesis and is involved in the regulation of the Hippo signaling pathway. This is Serine/threonine-protein kinase Nek8 (Nek8) from Rattus norvegicus (Rat).